The sequence spans 179 residues: UPF0227 protein Swoo_1808 (179 aa).

Belongs to the UPF0227 family.

In Shewanella woodyi (strain ATCC 51908 / MS32), this protein is UPF0227 protein Swoo_1808.